A 129-amino-acid chain; its full sequence is Small ribosomal subunit protein uS11 (129 aa).

This sequence belongs to the universal ribosomal protein uS11 family. In terms of assembly, part of the 30S ribosomal subunit. Interacts with proteins S7 and S18. Binds to IF-3.

Located on the platform of the 30S subunit, it bridges several disparate RNA helices of the 16S rRNA. Forms part of the Shine-Dalgarno cleft in the 70S ribosome. The polypeptide is Small ribosomal subunit protein uS11 (Nitrosospira multiformis (strain ATCC 25196 / NCIMB 11849 / C 71)).